Consider the following 94-residue polypeptide: Large ribosomal subunit protein bL27 (94 aa).

A propeptide spanning residues 1 to 9 is cleaved from the precursor; it reads MNLANLQLF. The tract at residues 11–33 is disordered; sequence HKKGGGSTSNGRDSQAKRLGAKA.

It belongs to the bacterial ribosomal protein bL27 family. Post-translationally, the N-terminus is cleaved by ribosomal processing cysteine protease Prp.

The chain is Large ribosomal subunit protein bL27 from Streptococcus agalactiae serotype V (strain ATCC BAA-611 / 2603 V/R).